The primary structure comprises 73 residues: Cell division protein ZapB (73 aa).

Residues Leu3–Leu69 adopt a coiled-coil conformation. The segment at Glu30–Gln50 is disordered. Over residues Asn41–Gln50 the composition is skewed to low complexity.

The protein belongs to the ZapB family. In terms of assembly, homodimer. The ends of the coiled-coil dimer bind to each other, forming polymers. Interacts with FtsZ.

The protein resides in the cytoplasm. In terms of biological role, non-essential, abundant cell division factor that is required for proper Z-ring formation. It is recruited early to the divisome by direct interaction with FtsZ, stimulating Z-ring assembly and thereby promoting cell division earlier in the cell cycle. Its recruitment to the Z-ring requires functional FtsA or ZipA. The sequence is that of Cell division protein ZapB from Shewanella putrefaciens (strain CN-32 / ATCC BAA-453).